We begin with the raw amino-acid sequence, 195 residues long: Heterogeneous nuclear ribonucleoprotein A/B (195 aa).

The tract at residues 1-23 (EEVADGQAHGEXVYREEHHEGEK) is disordered. Residues 12 to 23 (XVYREEHHEGEK) show a composition bias toward basic and acidic residues. Residues 32–48 (EETKLFVGALSWETTEK) enclose the RRM domain. Arg-119 and Arg-122 each carry asymmetric dimethylarginine. Ser-173 is subject to Phosphoserine; by CK2.

Post-translationally, extensively phosphorylated on tyrosine residues.

It localises to the cytoplasm. Its subcellular location is the nucleus. Its function is as follows. May regulate mRNA translation and stability. It binds to poly(A) and poly(U) regions of RNA. This binding is inhibited when the protein is phosphorylated. This chain is Heterogeneous nuclear ribonucleoprotein A/B, found in Artemia salina (Brine shrimp).